Consider the following 292-residue polypeptide: Ribosomal protein L11 methyltransferase (292 aa).

Residues Thr144, Gly165, Asp187, and Asn229 each coordinate S-adenosyl-L-methionine.

The protein belongs to the methyltransferase superfamily. PrmA family.

Its subcellular location is the cytoplasm. It catalyses the reaction L-lysyl-[protein] + 3 S-adenosyl-L-methionine = N(6),N(6),N(6)-trimethyl-L-lysyl-[protein] + 3 S-adenosyl-L-homocysteine + 3 H(+). Methylates ribosomal protein L11. The chain is Ribosomal protein L11 methyltransferase from Pseudomonas putida (strain ATCC 47054 / DSM 6125 / CFBP 8728 / NCIMB 11950 / KT2440).